Consider the following 449-residue polypeptide: UDP-N-acetylmuramoylalanine--D-glutamate ligase (449 aa).

Position 111–117 (G111–T117) interacts with ATP.

This sequence belongs to the MurCDEF family.

It is found in the cytoplasm. It carries out the reaction UDP-N-acetyl-alpha-D-muramoyl-L-alanine + D-glutamate + ATP = UDP-N-acetyl-alpha-D-muramoyl-L-alanyl-D-glutamate + ADP + phosphate + H(+). It participates in cell wall biogenesis; peptidoglycan biosynthesis. Its function is as follows. Cell wall formation. Catalyzes the addition of glutamate to the nucleotide precursor UDP-N-acetylmuramoyl-L-alanine (UMA). The sequence is that of UDP-N-acetylmuramoylalanine--D-glutamate ligase from Rickettsia felis (strain ATCC VR-1525 / URRWXCal2) (Rickettsia azadi).